The primary structure comprises 105 residues: Vacuolar ATPase assembly integral membrane protein VMA21 homolog (105 aa).

The disordered stretch occupies residues 1-26; sequence MSTKNKKAAGGNGGAPKQTRQQSHDS. At 1 to 36 the chain is on the cytoplasmic side; the sequence is MSTKNKKAAGGNGGAPKQTRQQSHDSQDYSSFKTVL. A helical transmembrane segment spans residues 37–57; that stretch reads FYCMLIVFLPVLTFFVLKGFV. Topologically, residues 58-68 are lumenal; the sequence is LDQFLDISEVK. A helical membrane pass occupies residues 69–89; it reads VNIASAVGAVVALHVALGLYI. At 90–105 the chain is on the cytoplasmic side; that stretch reads YRAYFGAPGSKASKTD.

The protein belongs to the VMA21 family.

It is found in the endoplasmic reticulum membrane. The protein resides in the endoplasmic reticulum-Golgi intermediate compartment membrane. The protein localises to the cytoplasmic vesicle. Its subcellular location is the COPII-coated vesicle membrane. Required for the assembly of the V0 complex of the vacuolar ATPase (V-ATPase) in the endoplasmic reticulum. The sequence is that of Vacuolar ATPase assembly integral membrane protein VMA21 homolog from Drosophila yakuba (Fruit fly).